Consider the following 334-residue polypeptide: FAD:protein FMN transferase (334 aa).

Positions 1–16 (MRNWLVALASLLLLAG) are cleaved as a signal peptide. Cys-17 is lipidated: N-palmitoyl cysteine. The S-diacylglycerol cysteine moiety is linked to residue Cys-17. Residues Met-31, Tyr-69, 110-112 (ALD), and Asp-168 contribute to the FAD site. A Mg(2+)-binding site is contributed by Thr-171. FAD contacts are provided by Lys-174 and Ile-259. The Mg(2+) site is built by Asp-285 and Thr-289.

Belongs to the ApbE family. Requires Mg(2+) as cofactor.

The protein resides in the cell inner membrane. The enzyme catalyses L-threonyl-[protein] + FAD = FMN-L-threonyl-[protein] + AMP + H(+). Functionally, flavin transferase that catalyzes the transfer of the FMN moiety of FAD and its covalent binding to the hydroxyl group of a threonine residue in a target flavoprotein such as NqrB and NqrC, two subunits of the NQR complex. Cannot use directly FMN instead of FAD as substrate. The protein is FAD:protein FMN transferase of Vibrio cholerae serotype O1 (strain ATCC 39541 / Classical Ogawa 395 / O395).